A 268-amino-acid polypeptide reads, in one-letter code: 14-3-3-like protein GF14 iota (268 aa).

Residues Ser-70 and Ser-193 each carry the phosphoserine modification. Residue Thr-214 is modified to Phosphothreonine. The segment at 240 to 268 is disordered; sequence DLPEDGGEDNIKTEESKQEQAKPADATEN. A compositionally biased stretch (basic and acidic residues) spans 248-261; it reads DNIKTEESKQEQAK.

It belongs to the 14-3-3 family. Expressed in flowers.

The protein localises to the nucleus. It is found in the cytoplasm. In terms of biological role, is associated with a DNA binding complex that binds to the G box, a well-characterized cis-acting DNA regulatory element found in plant genes. This chain is 14-3-3-like protein GF14 iota, found in Arabidopsis thaliana (Mouse-ear cress).